Here is a 599-residue protein sequence, read N- to C-terminus: Elongation factor 4 (599 aa).

The tr-type G domain occupies 2–184; it reads KNIRNFSIIA…RLVRDIPPPE (183 aa). Residues 14 to 19 and 131 to 134 contribute to the GTP site; these read DHGKST and NKID.

The protein belongs to the TRAFAC class translation factor GTPase superfamily. Classic translation factor GTPase family. LepA subfamily.

It is found in the cell inner membrane. It catalyses the reaction GTP + H2O = GDP + phosphate + H(+). Functionally, required for accurate and efficient protein synthesis under certain stress conditions. May act as a fidelity factor of the translation reaction, by catalyzing a one-codon backward translocation of tRNAs on improperly translocated ribosomes. Back-translocation proceeds from a post-translocation (POST) complex to a pre-translocation (PRE) complex, thus giving elongation factor G a second chance to translocate the tRNAs correctly. Binds to ribosomes in a GTP-dependent manner. The sequence is that of Elongation factor 4 from Sodalis glossinidius (strain morsitans).